The chain runs to 438 residues: GTPase Der (438 aa).

EngA-type G domains follow at residues 4 to 169 (PVVA…PEKG) and 178 to 353 (IDVA…DQNS). GTP is bound by residues 10–17 (GRPNVGKS), 57–61 (DTGGI), 120–123 (NKVD), 184–191 (GKPNVGKS), 231–235 (DTAGL), and 296–299 (NKWD). The 85-residue stretch at 354-438 (RRVKTGLLNE…PIRLKFKQKT (85 aa)) folds into the KH-like domain.

It belongs to the TRAFAC class TrmE-Era-EngA-EngB-Septin-like GTPase superfamily. EngA (Der) GTPase family. As to quaternary structure, associates with the 50S ribosomal subunit.

In terms of biological role, GTPase that plays an essential role in the late steps of ribosome biogenesis. This chain is GTPase Der, found in Halothermothrix orenii (strain H 168 / OCM 544 / DSM 9562).